Reading from the N-terminus, the 253-residue chain is HTH-type transcriptional regulator YdeO (253 aa).

One can recognise an HTH araC/xylS-type domain in the interval 137–233; it reads GKVRNIVNMK…GNSPKRVSKE (97 aa). 2 DNA-binding regions (H-T-H motif) span residues 154 to 175 and 200 to 223; these read KDICDCLYISESLLKKKLKQEQ and VNKIAEQCGYASTSYFIYAFRKHF.

Functionally, induces the expression of gadE and mdtEF. Could also regulate the expression of other genes involved in acid resistance. The protein is HTH-type transcriptional regulator YdeO (ydeO) of Escherichia coli O6:H1 (strain CFT073 / ATCC 700928 / UPEC).